Consider the following 77-residue polypeptide: Exodeoxyribonuclease 7 small subunit (77 aa).

Belongs to the XseB family. As to quaternary structure, heterooligomer composed of large and small subunits.

It is found in the cytoplasm. The enzyme catalyses Exonucleolytic cleavage in either 5'- to 3'- or 3'- to 5'-direction to yield nucleoside 5'-phosphates.. Bidirectionally degrades single-stranded DNA into large acid-insoluble oligonucleotides, which are then degraded further into small acid-soluble oligonucleotides. In Clostridium acetobutylicum (strain ATCC 824 / DSM 792 / JCM 1419 / IAM 19013 / LMG 5710 / NBRC 13948 / NRRL B-527 / VKM B-1787 / 2291 / W), this protein is Exodeoxyribonuclease 7 small subunit.